A 349-amino-acid chain; its full sequence is Isopentenyl-diphosphate delta-isomerase (349 aa).

8-9 (RK) provides a ligand contact to substrate. FMN is bound by residues serine 66, 67–69 (SMT), serine 97, and asparagine 125. Residue 97-99 (STR) participates in substrate binding. Glutamine 160 contacts substrate. Glutamate 161 provides a ligand contact to Mg(2+). Residues lysine 192, threonine 222, 272–274 (GMK), and 293–294 (AR) contribute to the FMN site.

This sequence belongs to the IPP isomerase type 2 family. Homooctamer. Dimer of tetramers. Requires FMN as cofactor. It depends on NADPH as a cofactor. Mg(2+) serves as cofactor.

It is found in the cytoplasm. The enzyme catalyses isopentenyl diphosphate = dimethylallyl diphosphate. Involved in the biosynthesis of isoprenoids. Catalyzes the 1,3-allylic rearrangement of the homoallylic substrate isopentenyl (IPP) to its allylic isomer, dimethylallyl diphosphate (DMAPP). This chain is Isopentenyl-diphosphate delta-isomerase, found in Oceanobacillus iheyensis (strain DSM 14371 / CIP 107618 / JCM 11309 / KCTC 3954 / HTE831).